The sequence spans 262 residues: Thiazole synthase (262 aa).

The active-site Schiff-base intermediate with DXP is Lys-98. Residues Gly-159, 186-187 (AG), and 208-209 (NT) contribute to the 1-deoxy-D-xylulose 5-phosphate site.

It belongs to the ThiG family. In terms of assembly, homotetramer. Forms heterodimers with either ThiH or ThiS.

It is found in the cytoplasm. It catalyses the reaction [ThiS sulfur-carrier protein]-C-terminal-Gly-aminoethanethioate + 2-iminoacetate + 1-deoxy-D-xylulose 5-phosphate = [ThiS sulfur-carrier protein]-C-terminal Gly-Gly + 2-[(2R,5Z)-2-carboxy-4-methylthiazol-5(2H)-ylidene]ethyl phosphate + 2 H2O + H(+). The protein operates within cofactor biosynthesis; thiamine diphosphate biosynthesis. Catalyzes the rearrangement of 1-deoxy-D-xylulose 5-phosphate (DXP) to produce the thiazole phosphate moiety of thiamine. Sulfur is provided by the thiocarboxylate moiety of the carrier protein ThiS. In vitro, sulfur can be provided by H(2)S. The protein is Thiazole synthase of Hahella chejuensis (strain KCTC 2396).